The following is a 244-amino-acid chain: 3-deoxy-manno-octulosonate cytidylyltransferase (244 aa).

It belongs to the KdsB family.

Its subcellular location is the cytoplasm. It catalyses the reaction 3-deoxy-alpha-D-manno-oct-2-ulosonate + CTP = CMP-3-deoxy-beta-D-manno-octulosonate + diphosphate. It functions in the pathway nucleotide-sugar biosynthesis; CMP-3-deoxy-D-manno-octulosonate biosynthesis; CMP-3-deoxy-D-manno-octulosonate from 3-deoxy-D-manno-octulosonate and CTP: step 1/1. It participates in bacterial outer membrane biogenesis; lipopolysaccharide biosynthesis. Functionally, activates KDO (a required 8-carbon sugar) for incorporation into bacterial lipopolysaccharide in Gram-negative bacteria. This is 3-deoxy-manno-octulosonate cytidylyltransferase from Anaeromyxobacter sp. (strain Fw109-5).